The primary structure comprises 365 residues: Centrosomal protein of 41 kDa B (365 aa).

A compositionally biased stretch (basic and acidic residues) spans 1 to 14 (MSAKRSIGDPEILK). Disordered stretches follow at residues 1–23 (MSAK…NQKY) and 104–123 (EFLT…SKSP). Residues 177–274 (EDCPFLLLDV…ISQKFPQGLT (98 aa)) form the Rhodanese domain. Positions 329-365 (TSTPSRLRLDSRNSKVPSSASSARSLSSTSSHSKPWK) are disordered. The segment covering 342-365 (SKVPSSASSARSLSSTSSHSKPWK) has biased composition (low complexity).

It belongs to the CEP41 family.

It is found in the cytoplasm. It localises to the cytoskeleton. The protein resides in the microtubule organizing center. Its subcellular location is the centrosome. The protein localises to the cell projection. It is found in the cilium. It localises to the cilium basal body. Its function is as follows. Required during ciliogenesis for tubulin glutamylation in cilium. Probably acts by participating in the transport of tubulin polyglutamylases between the basal body and the cilium. This is Centrosomal protein of 41 kDa B (cep41-b) from Xenopus laevis (African clawed frog).